The sequence spans 118 residues: Endoribonuclease MazF9 (118 aa).

This sequence belongs to the PemK/MazF family. As to quaternary structure, forms a complex with cognate antitoxin MazE9.

Functionally, toxic component of a type II toxin-antitoxin (TA) system. Upon expression in E.coli and M.smegmatis inhibits cell growth and colony formation. Its toxic effect is neutralized by coexpression with cognate antitoxin MazE9. Acts as an mRNA interferase, specifically cleaving between U and C in UAC sequences. May cleave its cognate antitoxin's gene. In E.coli expression with non-cognate antitoxins VapB27 and VapB40 partially neutralizes the toxin. This chain is Endoribonuclease MazF9 (mazF9), found in Mycobacterium tuberculosis (strain ATCC 25618 / H37Rv).